Consider the following 265-residue polypeptide: Small ribosomal subunit protein uS2 (265 aa).

Residues 226-265 (AAAPNSASVREEEFSAESADEGKGRRAPAKKGDKKADAAE) are disordered. The segment covering 245-265 (DEGKGRRAPAKKGDKKADAAE) has biased composition (basic and acidic residues).

The protein belongs to the universal ribosomal protein uS2 family.

This chain is Small ribosomal subunit protein uS2, found in Xanthomonas euvesicatoria pv. vesicatoria (strain 85-10) (Xanthomonas campestris pv. vesicatoria).